Here is a 218-residue protein sequence, read N- to C-terminus: 3-dehydroquinate dehydratase (218 aa).

3-dehydroquinate-binding positions include 29–31 (EFR) and arginine 56. The active-site Proton donor/acceptor is the histidine 116. Residue lysine 142 is the Schiff-base intermediate with substrate of the active site. Arginine 180, serine 200, and glutamine 204 together coordinate 3-dehydroquinate.

It belongs to the type-I 3-dehydroquinase family. Homodimer.

It carries out the reaction 3-dehydroquinate = 3-dehydroshikimate + H2O. Its pathway is metabolic intermediate biosynthesis; chorismate biosynthesis; chorismate from D-erythrose 4-phosphate and phosphoenolpyruvate: step 3/7. Functionally, involved in the third step of the chorismate pathway, which leads to the biosynthesis of aromatic amino acids. Catalyzes the cis-dehydration of 3-dehydroquinate (DHQ) and introduces the first double bond of the aromatic ring to yield 3-dehydroshikimate. The chain is 3-dehydroquinate dehydratase from Methanococcus maripaludis (strain C7 / ATCC BAA-1331).